The sequence spans 226 residues: Transcriptional regulatory protein CitT (226 aa).

Positions 3 to 119 (HIAIAEDDFR…KFRQVLLQYK (117 aa)) constitute a Response regulatory domain. Aspartate 54 is subject to 4-aspartylphosphate. A DNA-binding region (H-T-H motif) is located at residues 178–197 (AEELGEKMGASRTTARRYAE).

Post-translationally, phosphorylated by CitS.

The protein resides in the cytoplasm. In terms of biological role, member of the two-component regulatory system CitT/CitS. Regulates the expression of the citM-yflN operon. Phosphorylated CitT binds to the citM promoter to activate the transcription of the citM-yflN operon. This chain is Transcriptional regulatory protein CitT (citT), found in Bacillus subtilis (strain 168).